Reading from the N-terminus, the 639-residue chain is Chaperone protein HtpG (639 aa).

An a; substrate-binding region spans residues Met1–Arg348. Residues Glu349–Arg565 are b. The tract at residues Leu566 to Gly639 is c.

Belongs to the heat shock protein 90 family. As to quaternary structure, homodimer.

It is found in the cytoplasm. Molecular chaperone. Has ATPase activity. The sequence is that of Chaperone protein HtpG from Treponema pallidum (strain Nichols).